The primary structure comprises 355 residues: UDP-3-O-acylglucosamine N-acyltransferase (355 aa).

The active-site Proton acceptor is the histidine 258.

The protein belongs to the transferase hexapeptide repeat family. LpxD subfamily. In terms of assembly, homotrimer.

It catalyses the reaction a UDP-3-O-[(3R)-3-hydroxyacyl]-alpha-D-glucosamine + a (3R)-hydroxyacyl-[ACP] = a UDP-2-N,3-O-bis[(3R)-3-hydroxyacyl]-alpha-D-glucosamine + holo-[ACP] + H(+). The protein operates within bacterial outer membrane biogenesis; LPS lipid A biosynthesis. In terms of biological role, catalyzes the N-acylation of UDP-3-O-acylglucosamine using 3-hydroxyacyl-ACP as the acyl donor. Is involved in the biosynthesis of lipid A, a phosphorylated glycolipid that anchors the lipopolysaccharide to the outer membrane of the cell. The chain is UDP-3-O-acylglucosamine N-acyltransferase from Agrobacterium fabrum (strain C58 / ATCC 33970) (Agrobacterium tumefaciens (strain C58)).